The sequence spans 225 residues: UPF0758 protein Shewmr4_3597 (225 aa).

The MPN domain occupies 102–224 (VLTNPDLTRD…IVSFAERGWI (123 aa)). 3 residues coordinate Zn(2+): H173, H175, and D186. The JAMM motif motif lies at 173–186 (HNHPSGIAEPSQAD).

It belongs to the UPF0758 family.

This Shewanella sp. (strain MR-4) protein is UPF0758 protein Shewmr4_3597.